A 101-amino-acid chain; its full sequence is DET1- and DDB1-associated protein 1 (101 aa).

The tract at residues 67 to 101 (NAAKKRDQDQLEIGETSAPPRKIARTDSQEMNEDT) is disordered.

The protein belongs to the DDA1 family. As to quaternary structure, component of numerous DCX (DDB1-CUL4-X-box) E3 ubiquitin-protein ligase complexes which consist of a core of DDB1, cullin-4 (CUL4A or CUL4B), DDA1 and RBX1.

The protein operates within protein modification; protein ubiquitination. Functionally, functions as a component of numerous distinct DCX (DDB1-CUL4-X-box) E3 ubiquitin-protein ligase complexes which mediate the ubiquitination and subsequent proteasomal degradation of target proteins. In the DCX complexes, acts as a scaffolding subunit required to stabilize the complex. In Xenopus laevis (African clawed frog), this protein is DET1- and DDB1-associated protein 1.